A 577-amino-acid chain; its full sequence is Arginine--tRNA ligase (577 aa).

A 'HIGH' region motif is present at residues A132–H142.

It belongs to the class-I aminoacyl-tRNA synthetase family. Monomer.

It localises to the cytoplasm. The enzyme catalyses tRNA(Arg) + L-arginine + ATP = L-arginyl-tRNA(Arg) + AMP + diphosphate. This Janthinobacterium sp. (strain Marseille) (Minibacterium massiliensis) protein is Arginine--tRNA ligase.